Here is a 391-residue protein sequence, read N- to C-terminus: 3-ketoacyl-CoA thiolase (391 aa).

The active-site Acyl-thioester intermediate is Cys-95. Catalysis depends on proton acceptor residues His-347 and Cys-377.

It belongs to the thiolase-like superfamily. Thiolase family. In terms of assembly, heterotetramer of two alpha chains (FadB) and two beta chains (FadA).

It localises to the cytoplasm. The enzyme catalyses an acyl-CoA + acetyl-CoA = a 3-oxoacyl-CoA + CoA. It functions in the pathway lipid metabolism; fatty acid beta-oxidation. Functionally, catalyzes the final step of fatty acid oxidation in which acetyl-CoA is released and the CoA ester of a fatty acid two carbons shorter is formed. This Saccharophagus degradans (strain 2-40 / ATCC 43961 / DSM 17024) protein is 3-ketoacyl-CoA thiolase.